Reading from the N-terminus, the 179-residue chain is Replication restart protein DnaT (179 aa).

The interval Met1–Ala83 is required for trimerization and to bind PriB. Positions Val84–Gly179 are binds ssDNA. The disordered stretch occupies residues Ser151–Gly179. Over residues Pro159–Ile173 the composition is skewed to basic and acidic residues.

The protein belongs to the DnaT family. In terms of assembly, homotrimer. Interacts with PriB. Interacts with PriC. Component of the replication restart primosome. Primosome assembly occurs via a 'hand-off' mechanism. PriA binds to replication forks, subsequently PriB then DnaT bind; DnaT then displaces ssDNA to generate the helicase loading substrate.

Involved in the restart of stalled replication forks, which reloads the replicative helicase on sites other than the origin of replication. Can function in multiple replication restart pathways. Displaces ssDNA from a PriB-ssDNA complex. Probably forms a spiral filament on ssDNA. Functionally, binds single-stranded (ss)DNA. The minimal binding site is about 26 +/- 2 nucleotides (nt) per trimer. Two DNA-protein complexes are seen with 55 nt-long ssDNA. The chain is Replication restart protein DnaT from Klebsiella pneumoniae subsp. pneumoniae (strain ATCC 700721 / MGH 78578).